A 115-amino-acid chain; its full sequence is NAD(P)H-quinone oxidoreductase subunit M (115 aa).

This sequence belongs to the complex I NdhM subunit family. As to quaternary structure, NDH-1 can be composed of about 15 different subunits; different subcomplexes with different compositions have been identified which probably have different functions.

The protein resides in the cellular thylakoid membrane. The catalysed reaction is a plastoquinone + NADH + (n+1) H(+)(in) = a plastoquinol + NAD(+) + n H(+)(out). The enzyme catalyses a plastoquinone + NADPH + (n+1) H(+)(in) = a plastoquinol + NADP(+) + n H(+)(out). Its function is as follows. NDH-1 shuttles electrons from an unknown electron donor, via FMN and iron-sulfur (Fe-S) centers, to quinones in the respiratory and/or the photosynthetic chain. The immediate electron acceptor for the enzyme in this species is believed to be plastoquinone. Couples the redox reaction to proton translocation, and thus conserves the redox energy in a proton gradient. Cyanobacterial NDH-1 also plays a role in inorganic carbon-concentration. The polypeptide is NAD(P)H-quinone oxidoreductase subunit M (Prochlorococcus marinus (strain MIT 9303)).